A 172-amino-acid polypeptide reads, in one-letter code: NADH-ubiquinone oxidoreductase chain 6 (172 aa).

The next 4 membrane-spanning stretches (helical) occupy residues 1–21, 38–58, 86–106, and 147–167; these read MNNY…GLAL, VGCL…VFLI, WLIL…ICVL, and CATW…FIII.

The protein belongs to the complex I subunit 6 family. Core subunit of respiratory chain NADH dehydrogenase (Complex I) which is composed of 45 different subunits.

Its subcellular location is the mitochondrion inner membrane. The catalysed reaction is a ubiquinone + NADH + 5 H(+)(in) = a ubiquinol + NAD(+) + 4 H(+)(out). Its function is as follows. Core subunit of the mitochondrial membrane respiratory chain NADH dehydrogenase (Complex I) which catalyzes electron transfer from NADH through the respiratory chain, using ubiquinone as an electron acceptor. Essential for the catalytic activity and assembly of complex I. The protein is NADH-ubiquinone oxidoreductase chain 6 (Mtnd6) of Mus musculus (Mouse).